Here is a 500-residue protein sequence, read N- to C-terminus: Aspartyl/glutamyl-tRNA(Asn/Gln) amidotransferase subunit B (500 aa).

This sequence belongs to the GatB/GatE family. GatB subfamily. Heterotrimer of A, B and C subunits.

It catalyses the reaction L-glutamyl-tRNA(Gln) + L-glutamine + ATP + H2O = L-glutaminyl-tRNA(Gln) + L-glutamate + ADP + phosphate + H(+). The enzyme catalyses L-aspartyl-tRNA(Asn) + L-glutamine + ATP + H2O = L-asparaginyl-tRNA(Asn) + L-glutamate + ADP + phosphate + 2 H(+). Functionally, allows the formation of correctly charged Asn-tRNA(Asn) or Gln-tRNA(Gln) through the transamidation of misacylated Asp-tRNA(Asn) or Glu-tRNA(Gln) in organisms which lack either or both of asparaginyl-tRNA or glutaminyl-tRNA synthetases. The reaction takes place in the presence of glutamine and ATP through an activated phospho-Asp-tRNA(Asn) or phospho-Glu-tRNA(Gln). This Rhizobium meliloti (strain 1021) (Ensifer meliloti) protein is Aspartyl/glutamyl-tRNA(Asn/Gln) amidotransferase subunit B.